Consider the following 240-residue polypeptide: Ditrans,polycis-undecaprenyl-diphosphate synthase ((2E,6E)-farnesyl-diphosphate specific) (240 aa).

Aspartate 18 is a catalytic residue. Aspartate 18 lines the Mg(2+) pocket. Substrate is bound by residues 19-22, tryptophan 23, arginine 31, histidine 35, and 63-65; these read GNGR and SSE. Asparagine 66 (proton acceptor) is an active-site residue. Residues tryptophan 67, arginine 69, arginine 186, and 192 to 194 each bind substrate; that span reads RIS. Mg(2+) is bound at residue glutamate 205.

The protein belongs to the UPP synthase family. As to quaternary structure, homodimer. Mg(2+) is required as a cofactor.

It carries out the reaction 8 isopentenyl diphosphate + (2E,6E)-farnesyl diphosphate = di-trans,octa-cis-undecaprenyl diphosphate + 8 diphosphate. Functionally, catalyzes the sequential condensation of isopentenyl diphosphate (IPP) with (2E,6E)-farnesyl diphosphate (E,E-FPP) to yield (2Z,6Z,10Z,14Z,18Z,22Z,26Z,30Z,34E,38E)-undecaprenyl diphosphate (di-trans,octa-cis-UPP). UPP is the precursor of glycosyl carrier lipid in the biosynthesis of bacterial cell wall polysaccharide components such as peptidoglycan and lipopolysaccharide. The protein is Ditrans,polycis-undecaprenyl-diphosphate synthase ((2E,6E)-farnesyl-diphosphate specific) of Pasteurella multocida (strain Pm70).